Reading from the N-terminus, the 111-residue chain is Rhodanese domain-containing protein CG4456 (111 aa).

In terms of domain architecture, Rhodanese spans N12 to G110.

The protein is Rhodanese domain-containing protein CG4456 of Drosophila melanogaster (Fruit fly).